The chain runs to 103 residues: Small ribosomal subunit protein uS10 (103 aa).

Belongs to the universal ribosomal protein uS10 family. As to quaternary structure, part of the 30S ribosomal subunit.

Its function is as follows. Involved in the binding of tRNA to the ribosomes. This chain is Small ribosomal subunit protein uS10, found in Bordetella petrii (strain ATCC BAA-461 / DSM 12804 / CCUG 43448).